Consider the following 387-residue polypeptide: Probable peptidoglycan glycosyltransferase FtsW (387 aa).

A run of 9 helical transmembrane segments spans residues 19 to 39, 61 to 81, 86 to 106, 118 to 138, 161 to 181, 199 to 219, 286 to 306, 320 to 340, and 352 to 372; these read LDFSLYATVAILISVGIVMVA, ITFLAMGLVGGLVILAVPMSV, SGLLLILAFFLLMAVLIPGIG, LGPFSMQASEIAKFCLIVYFA, VLLIIVLLLLLEPDFGSSVVI, FLLLAVSGVAGLALMAVASPY, FIGAIALIGVFGFFLYRLVIL, YVVFGIGVMLAMQAFINMGVA, and PFISYGGSSLLITCGLMALVF.

It belongs to the SEDS family. FtsW subfamily.

The protein resides in the cell inner membrane. The enzyme catalyses [GlcNAc-(1-&gt;4)-Mur2Ac(oyl-L-Ala-gamma-D-Glu-L-Lys-D-Ala-D-Ala)](n)-di-trans,octa-cis-undecaprenyl diphosphate + beta-D-GlcNAc-(1-&gt;4)-Mur2Ac(oyl-L-Ala-gamma-D-Glu-L-Lys-D-Ala-D-Ala)-di-trans,octa-cis-undecaprenyl diphosphate = [GlcNAc-(1-&gt;4)-Mur2Ac(oyl-L-Ala-gamma-D-Glu-L-Lys-D-Ala-D-Ala)](n+1)-di-trans,octa-cis-undecaprenyl diphosphate + di-trans,octa-cis-undecaprenyl diphosphate + H(+). It functions in the pathway cell wall biogenesis; peptidoglycan biosynthesis. In terms of biological role, peptidoglycan polymerase that is essential for cell division. This chain is Probable peptidoglycan glycosyltransferase FtsW, found in Saccharophagus degradans (strain 2-40 / ATCC 43961 / DSM 17024).